Here is a 424-residue protein sequence, read N- to C-terminus: Serine--tRNA ligase (424 aa).

230–232 (TAE) serves as a coordination point for L-serine. 261-263 (RAE) lines the ATP pocket. Glu284 lines the L-serine pocket. An ATP-binding site is contributed by 348–351 (EISS). Ser384 provides a ligand contact to L-serine.

The protein belongs to the class-II aminoacyl-tRNA synthetase family. Type-1 seryl-tRNA synthetase subfamily. In terms of assembly, homodimer. The tRNA molecule binds across the dimer.

The protein resides in the cytoplasm. The catalysed reaction is tRNA(Ser) + L-serine + ATP = L-seryl-tRNA(Ser) + AMP + diphosphate + H(+). The enzyme catalyses tRNA(Sec) + L-serine + ATP = L-seryl-tRNA(Sec) + AMP + diphosphate + H(+). It functions in the pathway aminoacyl-tRNA biosynthesis; selenocysteinyl-tRNA(Sec) biosynthesis; L-seryl-tRNA(Sec) from L-serine and tRNA(Sec): step 1/1. Functionally, catalyzes the attachment of serine to tRNA(Ser). Is also able to aminoacylate tRNA(Sec) with serine, to form the misacylated tRNA L-seryl-tRNA(Sec), which will be further converted into selenocysteinyl-tRNA(Sec). This is Serine--tRNA ligase from Desulforamulus reducens (strain ATCC BAA-1160 / DSM 100696 / MI-1) (Desulfotomaculum reducens).